A 221-amino-acid polypeptide reads, in one-letter code: 5-methylthioribulose-1-phosphate/5-deoxyribulose-1-phosphate aldolase (221 aa).

Glutamate 75 (proton donor/acceptor) is an active-site residue. Co(2+) is bound by residues glutamate 75, histidine 94, histidine 96, and histidine 157.

It belongs to the aldolase class II family. The cofactor is Co(2+).

It carries out the reaction 5-(methylsulfanyl)-D-ribulose 1-phosphate = 2-(methylsulfanyl)acetaldehyde + dihydroxyacetone phosphate. The enzyme catalyses 5-deoxy-D-ribulose 1-phosphate = dihydroxyacetone phosphate + acetaldehyde. It functions in the pathway amino-acid biosynthesis; L-methionine biosynthesis via salvage pathway. Its function is as follows. Uses 5-methylthioribulose-1-phosphate to yield 2-(methylthio)acetaldehyde and dihydroxyacetone phosphate. Can also use 5-deoxyribulose 1-phosphate to yield acetaldehyde and dihydroxyacetone phosphate. Part of a bifunctional DHAP-shunt salvage pathway for SAM by-products. The polypeptide is 5-methylthioribulose-1-phosphate/5-deoxyribulose-1-phosphate aldolase (Rhodospirillum rubrum (strain ATCC 11170 / ATH 1.1.1 / DSM 467 / LMG 4362 / NCIMB 8255 / S1)).